Reading from the N-terminus, the 543-residue chain is CTP synthase (543 aa).

Residues 1 to 265 form an amidoligase domain region; it reads MTRYIFVTGG…DDFVVERFGL (265 aa). S13 lines the CTP pocket. S13 lines the UTP pocket. ATP contacts are provided by residues 14 to 19 and D71; that span reads SLGKGI. Mg(2+) contacts are provided by D71 and E139. CTP is bound by residues 146 to 148, 186 to 191, and K222; these read DIE and KTKPTQ. UTP is bound by residues 186–191 and K222; that span reads KTKPTQ. The Glutamine amidotransferase type-1 domain occupies 290-541; sequence TIAMVGKYME…VNAALAQKAK (252 aa). Residue G351 coordinates L-glutamine. C378 (nucleophile; for glutamine hydrolysis) is an active-site residue. Residues 379-382, E402, and R469 contribute to the L-glutamine site; that span reads LGMQ. Active-site residues include H514 and E516.

This sequence belongs to the CTP synthase family. Homotetramer.

It carries out the reaction UTP + L-glutamine + ATP + H2O = CTP + L-glutamate + ADP + phosphate + 2 H(+). It catalyses the reaction L-glutamine + H2O = L-glutamate + NH4(+). The catalysed reaction is UTP + NH4(+) + ATP = CTP + ADP + phosphate + 2 H(+). It functions in the pathway pyrimidine metabolism; CTP biosynthesis via de novo pathway; CTP from UDP: step 2/2. Allosterically activated by GTP, when glutamine is the substrate; GTP has no effect on the reaction when ammonia is the substrate. The allosteric effector GTP functions by stabilizing the protein conformation that binds the tetrahedral intermediate(s) formed during glutamine hydrolysis. Inhibited by the product CTP, via allosteric rather than competitive inhibition. Catalyzes the ATP-dependent amination of UTP to CTP with either L-glutamine or ammonia as the source of nitrogen. Regulates intracellular CTP levels through interactions with the four ribonucleotide triphosphates. The chain is CTP synthase from Ectopseudomonas mendocina (strain ymp) (Pseudomonas mendocina).